The chain runs to 304 residues: Acetylglutamate kinase (304 aa).

Substrate contacts are provided by residues 69 to 70, R91, and N202; that span reads GG.

It belongs to the acetylglutamate kinase family. ArgB subfamily.

Its subcellular location is the cytoplasm. It catalyses the reaction N-acetyl-L-glutamate + ATP = N-acetyl-L-glutamyl 5-phosphate + ADP. It participates in amino-acid biosynthesis; L-arginine biosynthesis; N(2)-acetyl-L-ornithine from L-glutamate: step 2/4. Functionally, catalyzes the ATP-dependent phosphorylation of N-acetyl-L-glutamate. This Caulobacter sp. (strain K31) protein is Acetylglutamate kinase.